The following is a 272-amino-acid chain: L-aspartate dehydrogenase (272 aa).

Alanine 125 and asparagine 192 together coordinate NAD(+). Histidine 222 is an active-site residue.

It belongs to the L-aspartate dehydrogenase family.

The enzyme catalyses L-aspartate + NADP(+) + H2O = oxaloacetate + NH4(+) + NADPH + H(+). The catalysed reaction is L-aspartate + NAD(+) + H2O = oxaloacetate + NH4(+) + NADH + H(+). The protein operates within cofactor biosynthesis; NAD(+) biosynthesis; iminoaspartate from L-aspartate (dehydrogenase route): step 1/1. Specifically catalyzes the NAD or NADP-dependent dehydrogenation of L-aspartate to iminoaspartate. The polypeptide is L-aspartate dehydrogenase (Nitrosopumilus maritimus (strain SCM1)).